Here is a 635-residue protein sequence, read N- to C-terminus: Early transcription factor 70 kDa subunit (635 aa).

One can recognise a Helicase ATP-binding domain in the interval 32–185 (RSIIDENKSV…SNIISLMSDE (154 aa)). 45–52 (HIMGSGKT) contributes to the ATP binding site. Positions 135 to 138 (DEAH) match the DEXH box motif. Residues 326–505 (KFKYFITKIE…TLPFDIKKLL (180 aa)) enclose the Helicase C-terminal domain.

Belongs to the helicase family. VETF subfamily. Heterodimer of a 70 kDa and a 82 kDa subunit. Part of the early transcription complex composed of ETF, RAP94, and the DNA-directed RNA polymerase.

The protein resides in the virion. Its function is as follows. Acts with RNA polymerase to initiate transcription from early gene promoters. Is recruited by the RPO-associated protein of 94 kDa (RAP94) to form the early transcription complex, which also contains the core RNA polymerase. ETF heterodimer binds to early gene promoters. This chain is Early transcription factor 70 kDa subunit (VETFS), found in Oryctolagus cuniculus (Rabbit).